We begin with the raw amino-acid sequence, 506 residues long: GTPase Der (506 aa).

2 EngA-type G domains span residues 3-166 (PVVA…GEQL) and 218-391 (IKIA…ACAT). Residues 9–16 (GRPNVGKS), 56–60 (DTGGI), 118–121 (NKTD), 224–231 (GRPNVGKS), 271–275 (DTAGV), and 336–339 (NKWD) contribute to the GTP site. The KH-like domain maps to 392-476 (QKTSTSMLTR…PIRIQFQEGN (85 aa)).

It belongs to the TRAFAC class TrmE-Era-EngA-EngB-Septin-like GTPase superfamily. EngA (Der) GTPase family. As to quaternary structure, associates with the 50S ribosomal subunit.

GTPase that plays an essential role in the late steps of ribosome biogenesis. This chain is GTPase Der, found in Actinobacillus pleuropneumoniae serotype 3 (strain JL03).